The chain runs to 428 residues: Serine--tRNA ligase (428 aa).

An L-serine-binding site is contributed by T235 to E237. R266 to E268 contributes to the ATP binding site. Residue E289 coordinates L-serine. E353–S356 is a binding site for ATP. L-serine is bound at residue S389.

Belongs to the class-II aminoacyl-tRNA synthetase family. Type-1 seryl-tRNA synthetase subfamily. In terms of assembly, homodimer. The tRNA molecule binds across the dimer.

It localises to the cytoplasm. The enzyme catalyses tRNA(Ser) + L-serine + ATP = L-seryl-tRNA(Ser) + AMP + diphosphate + H(+). The catalysed reaction is tRNA(Sec) + L-serine + ATP = L-seryl-tRNA(Sec) + AMP + diphosphate + H(+). It participates in aminoacyl-tRNA biosynthesis; selenocysteinyl-tRNA(Sec) biosynthesis; L-seryl-tRNA(Sec) from L-serine and tRNA(Sec): step 1/1. Its function is as follows. Catalyzes the attachment of serine to tRNA(Ser). Is also able to aminoacylate tRNA(Sec) with serine, to form the misacylated tRNA L-seryl-tRNA(Sec), which will be further converted into selenocysteinyl-tRNA(Sec). The chain is Serine--tRNA ligase from Shewanella piezotolerans (strain WP3 / JCM 13877).